The following is a 395-amino-acid chain: Crh-like protein 5 (395 aa).

A signal peptide spans 1–19 (MYFKYTAAALAAVLPLCSA). Cysteines 25 and 32 form a disulfide. One can recognise a GH16 domain in the interval 45-230 (ADFTSASALD…WAGGLTDYSA (186 aa)). The Nucleophile role is filled by Glu-119. The active-site Proton donor is Glu-123. Residues Glu-123, Arg-203, Trp-207, and Thr-218 each coordinate chitin. The segment at 271–374 (ISSSSSVTSS…PELSQGAAGS (104 aa)) is disordered. Composition is skewed to low complexity over residues 272–338 (SSSS…SNTG) and 348–364 (GSSS…ASAT). Asn-319 carries N-linked (GlcNAc...) asparagine glycosylation. Gly-370 carries GPI-like-anchor amidated glycine lipidation. Residues 371-395 (AAGSIKGSVTACALVFGAVAAVLAF) constitute a propeptide, removed in mature form.

The protein belongs to the glycosyl hydrolase 16 family. CRH1 subfamily. The GPI-like anchor contains a phosphoceramide lipid group. The anchor position has not been determined.

The protein localises to the cell membrane. The protein resides in the secreted. It is found in the cell wall. The catalysed reaction is Random endo-hydrolysis of N-acetyl-beta-D-glucosaminide (1-&gt;4)-beta-linkages in chitin and chitodextrins.. Its function is as follows. Dual chitinase/transglycosylase that plays a role in cell wall architecture. Chitinase and transglycosylase activities are coupled. Required for the polysaccharide cross-linking at the septa and the cell wall. More specifically, transfers chitin to 1,6-beta-glucan in the cell wall. Chr5 shows acceptor substrate promiscuity and is also able to cross-link chitin to chitin. In Aspergillus fumigatus (strain ATCC MYA-4609 / CBS 101355 / FGSC A1100 / Af293) (Neosartorya fumigata), this protein is Crh-like protein 5.